We begin with the raw amino-acid sequence, 418 residues long: Serine hydroxymethyltransferase (418 aa).

(6S)-5,6,7,8-tetrahydrofolate is bound by residues Leu-121 and 125 to 127 (GHL). Lys-230 is modified (N6-(pyridoxal phosphate)lysine). (6S)-5,6,7,8-tetrahydrofolate is bound at residue 356-358 (SPF).

This sequence belongs to the SHMT family. In terms of assembly, homodimer. Pyridoxal 5'-phosphate serves as cofactor.

It localises to the cytoplasm. It catalyses the reaction (6R)-5,10-methylene-5,6,7,8-tetrahydrofolate + glycine + H2O = (6S)-5,6,7,8-tetrahydrofolate + L-serine. It participates in one-carbon metabolism; tetrahydrofolate interconversion. Its pathway is amino-acid biosynthesis; glycine biosynthesis; glycine from L-serine: step 1/1. In terms of biological role, catalyzes the reversible interconversion of serine and glycine with tetrahydrofolate (THF) serving as the one-carbon carrier. This reaction serves as the major source of one-carbon groups required for the biosynthesis of purines, thymidylate, methionine, and other important biomolecules. Also exhibits THF-independent aldolase activity toward beta-hydroxyamino acids, producing glycine and aldehydes, via a retro-aldol mechanism. This is Serine hydroxymethyltransferase from Idiomarina loihiensis (strain ATCC BAA-735 / DSM 15497 / L2-TR).